The following is a 93-amino-acid chain: Cell division protein FtsB (93 aa).

The Cytoplasmic segment spans residues 1 to 3 (MRL). A helical transmembrane segment spans residues 4–21 (FILSLFALLVMFQYDFWF). At 22–93 (GKNGYLDYQD…FYRIVKNKNR (72 aa)) the chain is on the periplasmic side. Residues 28 to 76 (DYQDIKAEIIQRKQENKKLSQRNQTIFAEIQDLKNGIEAIEERARMEHE) are a coiled coil.

This sequence belongs to the FtsB family. Part of a complex composed of FtsB, FtsL and FtsQ.

It localises to the cell inner membrane. Its function is as follows. Essential cell division protein. May link together the upstream cell division proteins, which are predominantly cytoplasmic, with the downstream cell division proteins, which are predominantly periplasmic. This Histophilus somni (strain 129Pt) (Haemophilus somnus) protein is Cell division protein FtsB.